Reading from the N-terminus, the 289-residue chain is ATP phosphoribosyltransferase (289 aa).

The protein belongs to the ATP phosphoribosyltransferase family. Long subfamily. Mg(2+) is required as a cofactor.

It localises to the cytoplasm. The enzyme catalyses 1-(5-phospho-beta-D-ribosyl)-ATP + diphosphate = 5-phospho-alpha-D-ribose 1-diphosphate + ATP. It functions in the pathway amino-acid biosynthesis; L-histidine biosynthesis; L-histidine from 5-phospho-alpha-D-ribose 1-diphosphate: step 1/9. Its activity is regulated as follows. Feedback inhibited by histidine. Catalyzes the condensation of ATP and 5-phosphoribose 1-diphosphate to form N'-(5'-phosphoribosyl)-ATP (PR-ATP). Has a crucial role in the pathway because the rate of histidine biosynthesis seems to be controlled primarily by regulation of HisG enzymatic activity. This Methanosarcina barkeri (strain Fusaro / DSM 804) protein is ATP phosphoribosyltransferase.